Reading from the N-terminus, the 225-residue chain is DIAPVTPGVAVDLSHIPTDVKIKGFSGEDATPALEGADVVLISAGVARKPGMDRSDLFNVNAGIVKNLVQQIAKTSPQACIGIITNPVNTTVAIAAEVLKKAGVYDKNKLFGVTTLDIIRSNTFVAELKGKSSSDVEVPVIGGHSGVTILPLLSQIAGVSFSEQEVADLTKRIQNAGTEVVEAKAGGGSATLSMGQAAARFGLSLVRAMQGEKGVVECAYVEGDG.

An NAD(+)-binding site is contributed by Asp-1. Arg-48 and Arg-54 together coordinate substrate. Residues Asn-61 and 84–86 contribute to the NAD(+) site; that span reads ITN. Asn-86 and Arg-120 together coordinate substrate. The active-site Proton acceptor is His-144. Met-194 provides a ligand contact to NAD(+).

This sequence belongs to the LDH/MDH superfamily. MDH type 1 family. In terms of assembly, homodimer.

It catalyses the reaction (S)-malate + NAD(+) = oxaloacetate + NADH + H(+). Functionally, catalyzes the reversible oxidation of malate to oxaloacetate. This chain is Malate dehydrogenase (mdh), found in Raoultella terrigena (Klebsiella terrigena).